A 525-amino-acid polypeptide reads, in one-letter code: Sodium-dependent lysophosphatidylcholine symporter 1 (525 aa).

The tract at residues 1 to 29 is disordered; it reads MEKESENASCAGLLGQKNEPGSPTQSRSG. At 1–32 the chain is on the cytoplasmic side; it reads MEKESENASCAGLLGQKNEPGSPTQSRSGKHK. The helical transmembrane segment at 33 to 62 threads the bilayer; it reads LSVCSKICFAIGGAPYQITGCALGFFLQIF. The Extracellular portion of the chain corresponds to 63–73; that stretch reads LLDIAQVPPFY. The helical transmembrane segment at 74-94 threads the bilayer; the sequence is ASIILFSGRVWDAITDPLVGF. At 95–106 the chain is on the cytoplasmic side; sequence FVSKSSWTRLGR. Residues 107–126 form a helical membrane-spanning segment; sequence LLPWVVFSTPFAVVSYLLIW. At 127-137 the chain is on the extracellular side; it reads FVPGFSGVSMV. The helical transmembrane segment at 138–162 threads the bilayer; the sequence is IWYLVFYCLFQTLVTCFHVPYSALT. At 163 to 169 the chain is on the cytoplasmic side; the sequence is MFISKEQ. The chain crosses the membrane as a helical span at residues 170–201; sequence SDRDSATGYRMTVEVLGTVLGTAIQGQIVGRE. Over 202 to 226 the chain is Extracellular; the sequence is NTPCVEHIRETHLYNTSVIMEDLNI. Cys-205 and Cys-458 are joined by a disulfide. 2 N-linked (GlcNAc...) asparagine glycosylation sites follow: Asn-216 and Asn-225. The helical transmembrane segment at 227–260 threads the bilayer; that stretch reads THDVESLSSTRDAYMIAAGVICAIYVLCAIILTL. Residues 261-291 lie on the Cytoplasmic side of the membrane; sequence GVREKRDAYELLSDQPFSFWQGLKLVMSHKP. A helical transmembrane segment spans residues 292-318; the sequence is YIKLITGFLFTSLAFMLLEGNFALFLT. Over 319-329 the chain is Extracellular; sequence YTMGFRRDFQN. Residues 330 to 348 traverse the membrane as a helical segment; that stretch reads ILLVVMLSATLTVPFWQWF. At 349 to 352 the chain is on the cytoplasmic side; it reads LTRF. The helical transmembrane segment at 353–374 threads the bilayer; that stretch reads GKKTAVYFGISSVIPFLILVVL. The Extracellular portion of the chain corresponds to 375-377; the sequence is MES. The helical transmembrane segment at 378–414 threads the bilayer; that stretch reads NLILAYVVAVAAGLSVAAAFLLPWSMLPDVIDDFILK. Residues 415 to 424 are Cytoplasmic-facing; the sequence is NPDSHGHEPI. The helical transmembrane segment at 425–451 threads the bilayer; sequence FFSFYVFFTKFASGVSLGISTLSLDFA. Over 452–463 the chain is Extracellular; the sequence is GYQTRACSQPEQ. A helical transmembrane segment spans residues 464–487; that stretch reads VNLTLKMLICVAPVILILLGLLLF. Residues 488 to 525 lie on the Cytoplasmic side of the membrane; that stretch reads ILYPINEEKRKQNKKALQLIRESNRDSDSDSLELASNV.

The protein belongs to the major facilitator superfamily.

It is found in the cell membrane. It localises to the endoplasmic reticulum membrane. It carries out the reaction a 1-acyl-sn-glycero-3-phosphocholine(in) + Na(+)(in) = a 1-acyl-sn-glycero-3-phosphocholine(out) + Na(+)(out). The enzyme catalyses 1-(4Z,7Z,10Z,13Z,16Z,19Z-docosahexaenoyl)-sn-glycero-3-phosphocholine(in) + Na(+)(in) = 1-(4Z,7Z,10Z,13Z,16Z,19Z-docosahexaenoyl)-sn-glycero-3-phosphocholine(out) + Na(+)(out). It catalyses the reaction 1-(9Z-octadecenoyl)-sn-glycero-3-phosphocholine(in) + Na(+)(in) = 1-(9Z-octadecenoyl)-sn-glycero-3-phosphocholine(out) + Na(+)(out). The catalysed reaction is 1-hexadecanoyl-sn-glycero-3-phosphocholine(in) + Na(+)(in) = 1-hexadecanoyl-sn-glycero-3-phosphocholine(out) + Na(+)(out). It carries out the reaction a 1-acyl-sn-glycero-3-phosphoethanolamine(in) + Na(+)(in) = a 1-acyl-sn-glycero-3-phosphoethanolamine(out) + Na(+)(out). Functionally, sodium-dependent lysophosphatidylcholine (LPC) symporter, which plays an essential role for blood-brain barrier formation and function. Specifically expressed in endothelium of the blood-brain barrier of micro-vessels and transports LPC into the brain. Transport of LPC is essential because it constitutes the major mechanism by which docosahexaenoic acid (DHA), an omega-3 fatty acid that is essential for normal brain growth and cognitive function, enters the brain. Transports LPC carrying long-chain fatty acids such LPC oleate and LPC palmitate with a minimum acyl chain length of 14 carbons. Does not transport docosahexaenoic acid in unesterified fatty acid. In Xenopus tropicalis (Western clawed frog), this protein is Sodium-dependent lysophosphatidylcholine symporter 1 (mfsd2a).